Here is a 608-residue protein sequence, read N- to C-terminus: Protein Spindly (608 aa).

Met-1 carries the post-translational modification N-acetylmethionine. A coiled-coil region spans residues 1-445 (MEADITNLRN…LKLKYEPEER (445 aa)). Positions 465–487 (PEETEETAAASATEDGVSRLPPH) are disordered. Residues Ser-516, Ser-518, and Ser-558 each carry the phosphoserine modification.

The protein belongs to the Spindly family. As to quaternary structure, interacts with KNTC1 and ZW10. These interactions appear weak and may be transient or indirect. Interacts with dynein intermediate chain and dynactin (DCTN1). Interacts with the catalytically active form of USP45. Post-translationally, monoubiquitinated with'Lys-48' linkage. Deubiquitinated by USP45.

The protein localises to the cytoplasm. Its subcellular location is the cytoskeleton. The protein resides in the microtubule organizing center. It localises to the centrosome. It is found in the chromosome. The protein localises to the centromere. Its subcellular location is the kinetochore. The protein resides in the nucleus. It localises to the spindle pole. In terms of biological role, required for the localization of dynein and dynactin to the mitotic kintochore. Dynein is believed to control the initial lateral interaction between the kinetochore and spindle microtubules and to facilitate the subsequent formation of end-on kinetochore-microtubule attachments mediated by the NDC80 complex. Also required for correct spindle orientation. Does not appear to be required for the removal of spindle assembly checkpoint (SAC) proteins from the kinetochore upon bipolar spindle attachment. Acts as an adapter protein linking the dynein motor complex to various cargos and converts dynein from a non-processive to a highly processive motor in the presence of dynactin. Facilitates the interaction between dynein and dynactin and activates dynein processivity (the ability to move along a microtubule for a long distance without falling off the track). Plays a role in cell migration. The sequence is that of Protein Spindly (Spdl1) from Mus musculus (Mouse).